The following is a 607-amino-acid chain: Guanine nucleotide-binding protein-like 1 (607 aa).

Basic residues predominate over residues Met-1–Lys-14. Residues Met-1–Tyr-81 are disordered. Over residues Gln-15 to Leu-26 the composition is skewed to basic and acidic residues. Ser-32, Ser-33, and Ser-34 each carry phosphoserine. Phosphothreonine occurs at positions 48 and 50. 2 positions are modified to phosphoserine: Ser-51 and Ser-68. In terms of domain architecture, CP-type G spans Trp-178–Pro-418. Residue Asn-225–Asp-228 coordinates GTP. Ser-324 carries the post-translational modification Phosphoserine. GTP is bound by residues Gly-367–Ser-374 and Asp-411–Leu-415. The disordered stretch occupies residues Gly-544–Cys-607. The segment covering Gly-550–Pro-585 has biased composition (acidic residues). Phosphoserine occurs at positions 561, 562, and 563.

Belongs to the TRAFAC class YlqF/YawG GTPase family.

Its function is as follows. Possible regulatory or functional link with the histocompatibility cluster. The protein is Guanine nucleotide-binding protein-like 1 (Gnl1) of Rattus norvegicus (Rat).